Consider the following 512-residue polypeptide: MHTVVVGTSGVTASDVLAVARAGARIELSEEAVAALAAARSVVDALAAKPDPVYGVSTGFGALATRHISPELRGRLQRNIVRSHAAGMGPRVEREVVRALMFLRLKTVCSGRTGVRPEVAQTMADVLNAGITPVVHEYGSLGCSGDLAPLSHCALTLMGEGDAEGPDGTVRPAGELLAAHGIAPVELREKEGLALLNGTDGMLGMLVMALADLDTLYKSADITAALTMEALLGTDRVLAPELHAIRPHPGQAASAANMAAVLKGSGLTGHHQDDAPRVQDAYSVRCAPQVAGAGRDTMAHAGLVAERELAAAVDNPVVLPDGRVESNGNFHGAPVAYVLDFLAVAVADLGSIAERRTDRLLDKNRSHGLPPFLADDAGVDSGLMIAQYTQAALVGELKRLAVPASADSIPSSAMQEDHVSMGWSAARKLRTAVDNLARVIAVELYAATRAIQLREGLTPAPASQAVVEAVRAAGVEGPGPDRHLAPDLAAADAFVRAGHLVAAAESVTGPLR.

The 5-imidazolinone (Cys-Gly) cross-link spans C143–G145. S144 bears the 2,3-didehydroalanine (Ser) mark.

This sequence belongs to the PAL/histidase family. Post-translationally, contains an active site 4-methylidene-imidazol-5-one (MIO), which is formed autocatalytically by cyclization and dehydration of residues Cys-Ser-Gly.

It localises to the cytoplasm. The enzyme catalyses L-histidine = trans-urocanate + NH4(+). Its pathway is amino-acid degradation; L-histidine degradation into L-glutamate; N-formimidoyl-L-glutamate from L-histidine: step 1/3. This chain is Histidine ammonia-lyase, found in Streptomyces coelicolor (strain ATCC BAA-471 / A3(2) / M145).